A 379-amino-acid polypeptide reads, in one-letter code: Glucose-1-phosphate adenylyltransferase (379 aa).

Residues G164, 179–180 (EK), and S190 contribute to the alpha-D-glucose 1-phosphate site.

This sequence belongs to the bacterial/plant glucose-1-phosphate adenylyltransferase family. Homotetramer.

It carries out the reaction alpha-D-glucose 1-phosphate + ATP + H(+) = ADP-alpha-D-glucose + diphosphate. It participates in glycan biosynthesis; glycogen biosynthesis. Functionally, involved in the biosynthesis of ADP-glucose, a building block required for the elongation reactions to produce glycogen. Catalyzes the reaction between ATP and alpha-D-glucose 1-phosphate (G1P) to produce pyrophosphate and ADP-Glc. The sequence is that of Glucose-1-phosphate adenylyltransferase from Lactiplantibacillus plantarum (strain ATCC BAA-793 / NCIMB 8826 / WCFS1) (Lactobacillus plantarum).